The sequence spans 334 residues: Phosphate acyltransferase (334 aa).

Belongs to the PlsX family. In terms of assembly, homodimer. Probably interacts with PlsY.

The protein resides in the cytoplasm. The enzyme catalyses a fatty acyl-[ACP] + phosphate = an acyl phosphate + holo-[ACP]. It functions in the pathway lipid metabolism; phospholipid metabolism. Catalyzes the reversible formation of acyl-phosphate (acyl-PO(4)) from acyl-[acyl-carrier-protein] (acyl-ACP). This enzyme utilizes acyl-ACP as fatty acyl donor, but not acyl-CoA. This is Phosphate acyltransferase from Acholeplasma laidlawii (strain PG-8A).